Consider the following 280-residue polypeptide: Beta-glucosyl-HMC-alpha-glucosyl-transferase (280 aa).

It participates in genetic information processing; DNA modification. Its function is as follows. Transfers a gentiobiosyl-group on a hydroxymethylcytosine residue in DNA. Is involved in a DNA modification process to protects the phage genome against its own nucleases and the host restriction endonuclease system. The protein is Beta-glucosyl-HMC-alpha-glucosyl-transferase of Enterobacteria phage T6 (Bacteriophage T6).